A 308-amino-acid polypeptide reads, in one-letter code: Tetraacyldisaccharide 4'-kinase (308 aa).

S63–T70 serves as a coordination point for ATP.

The protein belongs to the LpxK family.

The enzyme catalyses a lipid A disaccharide + ATP = a lipid IVA + ADP + H(+). The protein operates within glycolipid biosynthesis; lipid IV(A) biosynthesis; lipid IV(A) from (3R)-3-hydroxytetradecanoyl-[acyl-carrier-protein] and UDP-N-acetyl-alpha-D-glucosamine: step 6/6. Transfers the gamma-phosphate of ATP to the 4'-position of a tetraacyldisaccharide 1-phosphate intermediate (termed DS-1-P) to form tetraacyldisaccharide 1,4'-bis-phosphate (lipid IVA). This Campylobacter jejuni (strain RM1221) protein is Tetraacyldisaccharide 4'-kinase.